Consider the following 696-residue polypeptide: Putative zinc metalloproteinase YIL108W (696 aa).

Residue Lys-245 forms a Glycyl lysine isopeptide (Lys-Gly) (interchain with G-Cter in ubiquitin) linkage. Position 318 (His-318) interacts with Zn(2+). The active site involves Glu-319. Residues His-322 and His-328 each contribute to the Zn(2+) site. Ser-361 is subject to Phosphoserine. Residues Lys-478, Lys-518, Lys-579, Lys-590, and Lys-596 each participate in a glycyl lysine isopeptide (Lys-Gly) (interchain with G-Cter in ubiquitin) cross-link. Residues 522–695 (GIKSPLYGRS…VDAFGIIYGA (174 aa)) form the Jacalin-type lectin domain.

It belongs to the peptidase M10B family. The cofactor is Zn(2+).

It is found in the cytoplasm. The chain is Putative zinc metalloproteinase YIL108W from Saccharomyces cerevisiae (strain ATCC 204508 / S288c) (Baker's yeast).